The primary structure comprises 149 residues: MHCPFCFAVDTKVIDSRLVGEGSSVRRRRQCLVCNERFTTFEVAELVMPRVIKSNDVREPFNEDKLRSGMLRALEKRPVSADDVEMALNHIKSQLRATGEREVPSKMIGNLVMEQLKKLDKVAYIRFASVYRSFEDIKDFGEEIARLQD.

Residues 3 to 34 (CPFCFAVDTKVIDSRLVGEGSSVRRRRQCLVC) fold into a zinc finger. The 91-residue stretch at 49–139 (PRVIKSNDVR…VYRSFEDIKD (91 aa)) folds into the ATP-cone domain.

Belongs to the NrdR family. It depends on Zn(2+) as a cofactor.

Its function is as follows. Negatively regulates transcription of bacterial ribonucleotide reductase nrd genes and operons by binding to NrdR-boxes. The sequence is that of Transcriptional repressor NrdR from Salmonella schwarzengrund (strain CVM19633).